The following is a 296-amino-acid chain: Lipoyl synthase (296 aa).

The [4Fe-4S] cluster site is built by Cys37, Cys42, Cys48, Cys63, Cys67, Cys70, and Ser276. The Radical SAM core domain occupies 49 to 265; the sequence is WSKKHTTVMI…ERLAKTKGFL (217 aa).

Belongs to the radical SAM superfamily. Lipoyl synthase family. [4Fe-4S] cluster is required as a cofactor.

It is found in the cytoplasm. It catalyses the reaction [[Fe-S] cluster scaffold protein carrying a second [4Fe-4S](2+) cluster] + N(6)-octanoyl-L-lysyl-[protein] + 2 oxidized [2Fe-2S]-[ferredoxin] + 2 S-adenosyl-L-methionine + 4 H(+) = [[Fe-S] cluster scaffold protein] + N(6)-[(R)-dihydrolipoyl]-L-lysyl-[protein] + 4 Fe(3+) + 2 hydrogen sulfide + 2 5'-deoxyadenosine + 2 L-methionine + 2 reduced [2Fe-2S]-[ferredoxin]. It participates in protein modification; protein lipoylation via endogenous pathway; protein N(6)-(lipoyl)lysine from octanoyl-[acyl-carrier-protein]: step 2/2. Catalyzes the radical-mediated insertion of two sulfur atoms into the C-6 and C-8 positions of the octanoyl moiety bound to the lipoyl domains of lipoate-dependent enzymes, thereby converting the octanoylated domains into lipoylated derivatives. The protein is Lipoyl synthase of Rickettsia rickettsii (strain Iowa).